The sequence spans 453 residues: tRNA modification GTPase MnmE (453 aa).

Positions 22, 79, and 119 each coordinate (6S)-5-formyl-5,6,7,8-tetrahydrofolate. In terms of domain architecture, TrmE-type G spans 215 to 376 (GMKVVIAGRP…LKAHLKSLMG (162 aa)). Asparagine 225 provides a ligand contact to K(+). GTP is bound by residues 225–230 (NAGKSS), 244–250 (TEIAGTT), 269–272 (DTAG), and 334–337 (NKAD). Serine 229 lines the Mg(2+) pocket. Residues threonine 244, isoleucine 246, and threonine 249 each contribute to the K(+) site. Mg(2+) is bound at residue threonine 250. Lysine 453 is a (6S)-5-formyl-5,6,7,8-tetrahydrofolate binding site.

The protein belongs to the TRAFAC class TrmE-Era-EngA-EngB-Septin-like GTPase superfamily. TrmE GTPase family. Homodimer. Heterotetramer of two MnmE and two MnmG subunits. The cofactor is K(+).

The protein localises to the cytoplasm. Its function is as follows. Exhibits a very high intrinsic GTPase hydrolysis rate. Involved in the addition of a carboxymethylaminomethyl (cmnm) group at the wobble position (U34) of certain tRNAs, forming tRNA-cmnm(5)s(2)U34. The chain is tRNA modification GTPase MnmE from Shewanella loihica (strain ATCC BAA-1088 / PV-4).